A 346-amino-acid polypeptide reads, in one-letter code: Dihydroorotate dehydrogenase (quinone) (346 aa).

FMN contacts are provided by residues 61–65 and Thr85; that span reads AGLDK. A substrate-binding site is contributed by Lys65. 110–114 provides a ligand contact to substrate; that stretch reads NRMGF. FMN-binding residues include Asn138 and Asn171. Asn171 serves as a coordination point for substrate. Ser174 acts as the Nucleophile in catalysis. Residue Asn176 coordinates substrate. Residues Lys216 and Thr244 each contribute to the FMN site. 245 to 246 is a binding site for substrate; sequence NT. Residues Gly267, Gly296, and 317–318 each bind FMN; that span reads YS.

This sequence belongs to the dihydroorotate dehydrogenase family. Type 2 subfamily. Monomer. It depends on FMN as a cofactor.

The protein resides in the cell membrane. It catalyses the reaction (S)-dihydroorotate + a quinone = orotate + a quinol. The protein operates within pyrimidine metabolism; UMP biosynthesis via de novo pathway; orotate from (S)-dihydroorotate (quinone route): step 1/1. Its function is as follows. Catalyzes the conversion of dihydroorotate to orotate with quinone as electron acceptor. This chain is Dihydroorotate dehydrogenase (quinone), found in Marinomonas sp. (strain MWYL1).